Here is a 267-residue protein sequence, read N- to C-terminus: Large ribosomal subunit protein uL4 (267 aa).

This sequence belongs to the universal ribosomal protein uL4 family. In terms of assembly, part of the 50S ribosomal subunit.

Functionally, one of the primary rRNA binding proteins, this protein initially binds near the 5'-end of the 23S rRNA. It is important during the early stages of 50S assembly. It makes multiple contacts with different domains of the 23S rRNA in the assembled 50S subunit and ribosome. Forms part of the polypeptide exit tunnel. This chain is Large ribosomal subunit protein uL4, found in Saccharolobus islandicus (strain M.16.27) (Sulfolobus islandicus).